The primary structure comprises 948 residues: Putative helicase 009L (948 aa).

The Helicase ATP-binding domain maps to 64 to 243 (LSEDTPYREL…ADVLNLILPQ (180 aa)). Residue 77 to 84 (HAPGTGKT) participates in ATP binding. Positions 187–190 (DEVH) match the DEAH box motif. The 184-residue stretch at 371–554 (VKYDYLVRVA…AVERILMTSA (184 aa)) folds into the Helicase C-terminal domain.

The chain is Putative helicase 009L from Frog virus 3 (isolate Goorha) (FV-3).